The following is an 882-amino-acid chain: DNA mismatch repair protein MutS (882 aa).

656 to 663 (GPNASGKS) is an ATP binding site.

It belongs to the DNA mismatch repair MutS family.

Its function is as follows. This protein is involved in the repair of mismatches in DNA. It is possible that it carries out the mismatch recognition step. This protein has a weak ATPase activity. The protein is DNA mismatch repair protein MutS of Synechococcus sp. (strain ATCC 27144 / PCC 6301 / SAUG 1402/1) (Anacystis nidulans).